Here is a 485-residue protein sequence, read N- to C-terminus: Peptidyl-prolyl isomerase CWC27 (485 aa).

One can recognise a PPIase cyclophilin-type domain in the interval 11-167 (SSGLVDLVTS…YPIKLHEVRV (157 aa)). The disordered stretch occupies residues 173-485 (DDLQPRTTKK…PQQRRQRSII (313 aa)). Basic and acidic residues-rich tracts occupy residues 184–204 (RIAEERRKKHEMETRVAEEQK) and 236–247 (SSHDLLKDDKHL). Polar residues-rich tracts occupy residues 249 to 270 (RQTIETSKSTKANTPAVSANIS), 278 to 292 (AQSSSSTTPPAVTKQ), 315 to 325 (PSDQKASSSTG), and 353 to 370 (ALLSFQSRLRTRPSSTTP). A compositionally biased stretch (acidic residues) spans 381-398 (DEVEEEAGEYGASDDDDD). Positions 428–465 (LDPRDHTDRERNPKAESSRDGKRGRDWVEHDRKYQNDR) are enriched in basic and acidic residues. Residues 466-485 (SRRHREHDKHPQQRRQRSII) are compositionally biased toward basic residues.

This sequence belongs to the cyclophilin-type PPIase family. CWC27 subfamily. Associated with the spliceosome.

It is found in the cytoplasm. The protein resides in the nucleus. It carries out the reaction [protein]-peptidylproline (omega=180) = [protein]-peptidylproline (omega=0). Its function is as follows. PPIases accelerate the folding of proteins. It catalyzes the cis-trans isomerization of proline imidic peptide bonds in oligopeptides. Involved in pre-mRNA splicing. The polypeptide is Peptidyl-prolyl isomerase CWC27 (CWC27) (Mycosarcoma maydis (Corn smut fungus)).